Here is a 70-residue protein sequence, read N- to C-terminus: UPF0352 protein PBPRA2586 (70 aa).

This sequence belongs to the UPF0352 family.

The chain is UPF0352 protein PBPRA2586 from Photobacterium profundum (strain SS9).